The chain runs to 307 residues: GTPase Era (307 aa).

Residues 7–181 (RCGWVALMGP…VELIRKKLPK (175 aa)) enclose the Era-type G domain. Positions 15–22 (GPPNAGKS) are G1. 15–22 (GPPNAGKS) contributes to the GTP binding site. Residues 41 to 45 (QTTRN) are G2. Positions 62 to 65 (DTPG) are G3. GTP contacts are provided by residues 62–66 (DTPGL) and 130–133 (NKVD). The G4 stretch occupies residues 130–133 (NKVD). Positions 160–162 (ISA) are G5. Residues 212–290 (LRQEVPYSVA…HLELWVKVRE (79 aa)) enclose the KH type-2 domain.

This sequence belongs to the TRAFAC class TrmE-Era-EngA-EngB-Septin-like GTPase superfamily. Era GTPase family. As to quaternary structure, monomer.

The protein localises to the cytoplasm. Its subcellular location is the cell inner membrane. In terms of biological role, an essential GTPase that binds both GDP and GTP, with rapid nucleotide exchange. Plays a role in 16S rRNA processing and 30S ribosomal subunit biogenesis and possibly also in cell cycle regulation and energy metabolism. The polypeptide is GTPase Era (Desulfovibrio desulfuricans (strain ATCC 27774 / DSM 6949 / MB)).